We begin with the raw amino-acid sequence, 160 residues long: Cyanate hydratase (160 aa).

Catalysis depends on residues R100, E103, and S126.

It belongs to the cyanase family.

The enzyme catalyses cyanate + hydrogencarbonate + 3 H(+) = NH4(+) + 2 CO2. Functionally, catalyzes the reaction of cyanate with bicarbonate to produce ammonia and carbon dioxide. The chain is Cyanate hydratase from Aspergillus oryzae (strain ATCC 42149 / RIB 40) (Yellow koji mold).